A 255-amino-acid chain; its full sequence is L-seryl-tRNA(Sec) kinase (255 aa).

7-14 (GLPSVGKS) is a binding site for ATP.

It belongs to the L-seryl-tRNA(Sec) kinase family.

The catalysed reaction is L-seryl-tRNA(Sec) + ATP = O-phospho-L-seryl-tRNA(Sec) + ADP. It functions in the pathway aminoacyl-tRNA biosynthesis; selenocysteinyl-tRNA(Sec) biosynthesis; selenocysteinyl-tRNA(Sec) from L-seryl-tRNA(Sec) (archaeal/eukaryal route): step 1/2. Its function is as follows. Specifically phosphorylates seryl-tRNA(Sec) to O-phosphoseryl-tRNA(Sec), an activated intermediate for selenocysteine biosynthesis. The protein is L-seryl-tRNA(Sec) kinase (pstK) of Methanococcus maripaludis (strain DSM 14266 / JCM 13030 / NBRC 101832 / S2 / LL).